Reading from the N-terminus, the 158-residue chain is Naphthalene 1,2-dioxygenase system, small oxygenase component (158 aa).

Belongs to the bacterial ring-hydroxylating dioxygenase beta subunit family. In terms of assembly, the naphthalene dioxygenase (NDO) multicomponent enzyme system is composed of an electron transfer component and a dioxygenase component (iron sulfur protein (ISP)). The electron transfer component is composed of a ferredoxin reductase (NdoR) and a ferredoxin (NdoA), and the dioxygenase component is formed of a heterohexamer (trimer of heterodimers) of three large alpha subunits (NdoB) and three small beta subunits (NdoC).

The protein operates within aromatic compound metabolism; naphthalene degradation. Its function is as follows. Component of the naphthalene dioxygenase (NDO) multicomponent enzyme system which catalyzes the incorporation of both atoms of molecular oxygen into naphthalene to form cis-(1R,2S)-dihydroxy-1,2-dihydronaphthalene. The beta subunit seems to have a structural role in the holoenzyme. The sequence is that of Naphthalene 1,2-dioxygenase system, small oxygenase component from Pseudomonas fluorescens.